A 641-amino-acid chain; its full sequence is Leucine-rich repeat receptor-like serine/threonine/tyrosine-protein kinase SOBIR1 (641 aa).

A signal peptide spans 1-31; that stretch reads MAVPTGSANLFLRPLILAVLSFLLLSSFVSS. Topologically, residues 32-284 are extracellular; it reads VEWLDIDSSD…KKKKSKKKKV (253 aa). LRR repeat units follow at residues 112-133, 136-159, 160-182, 183-205, and 207-228; these read ELKE…DILS, QLEV…SSLS, RLRI…KNLR, NLEN…IVSF, and NLRF…VMSS. Asn-154 carries an N-linked (GlcNAc...) asparagine glycan. Asn-186 carries an N-linked (GlcNAc...) asparagine glycan. The segment at 243 to 278 is disordered; that stretch reads AETPTSSPTNKPNNSTTSKAPKGAPKPGKLKKKKKK. Residues 245–259 show a composition bias toward polar residues; that stretch reads TPTSSPTNKPNNSTT. Asn-256 carries an N-linked (GlcNAc...) asparagine glycan. Positions 260-269 are enriched in low complexity; sequence SKAPKGAPKP. Residues 285 to 305 traverse the membrane as a helical segment; the sequence is AAWILGFVVGAIGGTISGFVF. Residues 306-641 are Cytoplasmic-facing; that stretch reads SVLFKLIIQA…VRTMLSQIKH (336 aa). Positions 347 to 641 constitute a Protein kinase domain; sequence LASLEIIGRG…VRTMLSQIKH (295 aa). ATP-binding positions include 353-361 and Lys-377; that span reads IGRGGCGEV. The Proton acceptor role is filled by Asp-489.

It belongs to the protein kinase superfamily. Ser/Thr protein kinase family. Interacts with CST. Interacts with RLP23. Component of a trimeric complex composed of RLP23, SOBIR1 and BAK1. BAK1 is recruited into a pre-formed RLP23-SOBIR1 complex in a ligand-dependent manner. In terms of processing, autophosphorylated on Ser, Thr and Tyr residues. In terms of tissue distribution, mostly present in leaves and flowers, with increasing expression in older flowers.

The protein resides in the cell membrane. The enzyme catalyses L-seryl-[protein] + ATP = O-phospho-L-seryl-[protein] + ADP + H(+). The catalysed reaction is L-threonyl-[protein] + ATP = O-phospho-L-threonyl-[protein] + ADP + H(+). It catalyses the reaction L-tyrosyl-[protein] + ATP = O-phospho-L-tyrosyl-[protein] + ADP + H(+). In terms of biological role, dual specificity kinase acting on both serine/threonine- and tyrosine-containing substrates. Acting as a counterplayer of BIR1, promotes the activation of plant defense and cell death. Component of the RLP23-SOBIR1-BAK1 complex that mediates NLP-triggered immunity. Functions as an inhibitor/regulator of abscission, probably by regulating membrane trafficking during abscission. This Arabidopsis thaliana (Mouse-ear cress) protein is Leucine-rich repeat receptor-like serine/threonine/tyrosine-protein kinase SOBIR1 (SOBIR1).